Consider the following 96-residue polypeptide: Acylphosphatase (96 aa).

An Acylphosphatase-like domain is found at 11–96 (ARRWYVRGRV…ITSYDSFRIR (86 aa)). Catalysis depends on residues Arg26 and Asn44.

The protein belongs to the acylphosphatase family.

It carries out the reaction an acyl phosphate + H2O = a carboxylate + phosphate + H(+). The protein is Acylphosphatase (acyP) of Solibacter usitatus (strain Ellin6076).